We begin with the raw amino-acid sequence, 136 residues long: Ribonuclease P protein component (136 aa).

It belongs to the RnpA family. As to quaternary structure, consists of a catalytic RNA component (M1 or rnpB) and a protein subunit.

It catalyses the reaction Endonucleolytic cleavage of RNA, removing 5'-extranucleotides from tRNA precursor.. RNaseP catalyzes the removal of the 5'-leader sequence from pre-tRNA to produce the mature 5'-terminus. It can also cleave other RNA substrates such as 4.5S RNA. The protein component plays an auxiliary but essential role in vivo by binding to the 5'-leader sequence and broadening the substrate specificity of the ribozyme. The chain is Ribonuclease P protein component from Burkholderia pseudomallei (strain 1106a).